A 338-amino-acid chain; its full sequence is GTPase Obg (338 aa).

One can recognise an Obg domain in the interval 1–159 (MQFIDQAEIE…RRIRLELKLL (159 aa)). The region spanning 160–328 (AEVGIIGLPN…MLQATWEQLD (169 aa)) is the OBG-type G domain. Residues 166–173 (GLPNAGKS), 191–195 (FTTLI), 213–216 (DIPG), 280–283 (NKLD), and 309–311 (SAV) each bind GTP. Residues serine 173 and threonine 193 each coordinate Mg(2+).

The protein belongs to the TRAFAC class OBG-HflX-like GTPase superfamily. OBG GTPase family. In terms of assembly, monomer. Requires Mg(2+) as cofactor.

It is found in the cytoplasm. Its function is as follows. An essential GTPase which binds GTP, GDP and possibly (p)ppGpp with moderate affinity, with high nucleotide exchange rates and a fairly low GTP hydrolysis rate. Plays a role in control of the cell cycle, stress response, ribosome biogenesis and in those bacteria that undergo differentiation, in morphogenesis control. The protein is GTPase Obg of Gloeothece citriformis (strain PCC 7424) (Cyanothece sp. (strain PCC 7424)).